The primary structure comprises 139 residues: Probable disulfide formation protein C 2 (139 aa).

A helical membrane pass occupies residues 6–25 (KYHIAIAWMIATSAMLISLF). C35 and C38 are joined by a disulfide. 2 helical membrane-spanning segments follow: residues 40 to 59 (YQRM…MYRK) and 66 to 83 (YAFP…YQIT). C95 and C101 are joined by a disulfide. Residues 110 to 133 (GFISIPMLSFIGFLVIIILIYIES) traverse the membrane as a helical segment.

It belongs to the DsbB family. BdbC subfamily.

The protein resides in the cell membrane. In terms of biological role, required for disulfide bond formation in some proteins. This is Probable disulfide formation protein C 2 (bdbC2) from Bacillus cereus (strain ATCC 10987 / NRS 248).